The sequence spans 411 residues: LL-diaminopimelate aminotransferase (411 aa).

Positions 15 and 42 each coordinate substrate. Residues tyrosine 72, 108–109 (AK), tyrosine 132, asparagine 187, tyrosine 218, and 246–248 (SFS) contribute to the pyridoxal 5'-phosphate site. Substrate is bound by residues lysine 109, tyrosine 132, and asparagine 187. Lysine 249 is subject to N6-(pyridoxal phosphate)lysine. Pyridoxal 5'-phosphate-binding residues include arginine 257 and asparagine 292. The substrate site is built by asparagine 292 and arginine 388.

This sequence belongs to the class-I pyridoxal-phosphate-dependent aminotransferase family. LL-diaminopimelate aminotransferase subfamily. In terms of assembly, homodimer. Requires pyridoxal 5'-phosphate as cofactor.

The enzyme catalyses (2S,6S)-2,6-diaminopimelate + 2-oxoglutarate = (S)-2,3,4,5-tetrahydrodipicolinate + L-glutamate + H2O + H(+). It participates in amino-acid biosynthesis; L-lysine biosynthesis via DAP pathway; LL-2,6-diaminopimelate from (S)-tetrahydrodipicolinate (aminotransferase route): step 1/1. Functionally, involved in the synthesis of meso-diaminopimelate (m-DAP or DL-DAP), required for both lysine and peptidoglycan biosynthesis. Catalyzes the direct conversion of tetrahydrodipicolinate to LL-diaminopimelate. The chain is LL-diaminopimelate aminotransferase from Rippkaea orientalis (strain PCC 8801 / RF-1) (Cyanothece sp. (strain PCC 8801)).